Consider the following 352-residue polypeptide: 4-hydroxy-2-oxovalerate aldolase (352 aa).

A Pyruvate carboxyltransferase domain is found at 14–266 (VRMTDTSLRD…KTGIDFFDIA (253 aa)). 22-23 (RD) contributes to the substrate binding site. D23 contributes to the Mn(2+) binding site. The Proton acceptor role is filled by H26. 2 residues coordinate substrate: S176 and H205. Residues H205 and H207 each contribute to the Mn(2+) site. A substrate-binding site is contributed by Y296.

This sequence belongs to the 4-hydroxy-2-oxovalerate aldolase family.

The catalysed reaction is (S)-4-hydroxy-2-oxopentanoate = acetaldehyde + pyruvate. This Mycolicibacterium gilvum (strain PYR-GCK) (Mycobacterium gilvum (strain PYR-GCK)) protein is 4-hydroxy-2-oxovalerate aldolase.